We begin with the raw amino-acid sequence, 258 residues long: UPF0246 protein mma_1385 (258 aa).

It belongs to the UPF0246 family.

The protein is UPF0246 protein mma_1385 of Janthinobacterium sp. (strain Marseille) (Minibacterium massiliensis).